An 837-amino-acid polypeptide reads, in one-letter code: Anaphase-promoting complex subunit 4 (837 aa).

2 stretches are compositionally biased toward low complexity: residues 59 to 81 and 547 to 581; these read NDNN…NDNN and SSSS…NNNN. 2 disordered regions span residues 59–89 and 547–588; these read NDNN…KSNK and SSSS…QSGN.

This sequence belongs to the APC4 family. The APC/C is composed of at least 13 subunits that stay tightly associated throughout the cell cycle: anapc1, anapc2, anapc3, anapc4, anapc5, anapc6, anapc7, anapc8, anapc10, anapc11, cdc20, cdc26 and cdh1.

The protein resides in the nucleus. The protein operates within protein modification; protein ubiquitination. Component of the anaphase promoting complex/cyclosome (APC/C), a cell cycle-regulated E3 ubiquitin-protein ligase complex that controls progression through mitosis and the G1 phase of the cell cycle. The sequence is that of Anaphase-promoting complex subunit 4 (anapc4) from Dictyostelium discoideum (Social amoeba).